The sequence spans 371 residues: MKLTVKTLKGSHFEIRVLPSDTIMAVKKNIEDSQGKDNYPCGQQLLIHNGKVLKDETSLVENKVTEEGFLVVMLSKSKSGGSAGQASVQTSSVSQPVSATTSSTKPAAPSTTQSSPVPASPIPAQEQPAAQTDTYGQAASTLVSGSSLEQMVQQIMEMGGGSWDKETVTRALRAAYNNPERAVDYLYSGIPQTAEVAVPVPEAQIAGSGAAPVAPASGGPNSSPLDLFPQETVAAAGSGDLGTLEFLRNNDQFQQLRTMVHSNPQILQPMLQELGKQNPQLLRLIQENQAEFLQLVNEPYEGSDGEGDMFDQPEQEMPHAINVTPAEQEAIQRLEAMGFDRALVIEAFLACDRNEELAANYLLENSGDFED.

The Ubiquitin-like domain maps to 1–79 (MKLTVKTLKG…LVVMLSKSKS (79 aa)). The segment covering 79 to 117 (SGGSAGQASVQTSSVSQPVSATTSSTKPAAPSTTQSSPV) has biased composition (low complexity). Residues 79 to 142 (SGGSAGQASV…DTYGQAASTL (64 aa)) are disordered. The span at 128–142 (PAAQTDTYGQAASTL) shows a compositional bias: polar residues. Positions 146–189 (SSLEQMVQQIMEMGGGSWDKETVTRALRAAYNNPERAVDYLYSG) constitute a UBA 1 domain. An STI1 domain is found at 242-285 (GTLEFLRNNDQFQQLRTMVHSNPQILQPMLQELGKQNPQLLRLI). The UBA 2 domain maps to 325 to 365 (PAEQEAIQRLEAMGFDRALVIEAFLACDRNEELAANYLLEN).

Belongs to the RAD23 family. In terms of assembly, interacts with 'Lys-48'-linked polyubiquitin chains. Interacts with RPN10 via its ubiquitin-like domain. Interacts with UBQ1, UBQ2, UBQ5, UBQ7, UBQ10, UBQ11 and IAA16. Binds to RAD4. As to expression, widely expressed in the whole plant.

It localises to the nucleus. Its subcellular location is the cytoplasm. Functionally, may be involved in nucleotide excision repair. Binds and presumably selects ubiquitin-conjugates for destruction. Prefers multiubiquitin chains rather than single ubiquitins, with a binding affinity for 'Lys-48'-linked ubiquitin chains. Acts as a ubiquitin receptor that associates with the 26S proteasomal docking subunit RPN10 for the indirect recognition of ubiquitinated substrates of ubiquitin/26S proteasome-mediated proteolysis (UPP). Involved in UV tolerance in both roots and hypocotyls, specifically in dark conditions. In Arabidopsis thaliana (Mouse-ear cress), this protein is Ubiquitin receptor RAD23b.